The primary structure comprises 254 residues: Nickel import ATP-binding protein NikD (254 aa).

Residues 2-241 (PQQIELRNIA…PKHTVTRSLV (240 aa)) enclose the ABC transporter domain. ATP is bound at residue 36–43 (GGSGSGKS).

This sequence belongs to the ABC transporter superfamily. Nickel importer (TC 3.A.1.5.3) family. In terms of assembly, the complex is composed of two ATP-binding proteins (NikD and NikE), two transmembrane proteins (NikB and NikC) and a solute-binding protein (NikA).

It is found in the cell inner membrane. The enzyme catalyses Ni(2+)(out) + ATP + H2O = Ni(2+)(in) + ADP + phosphate + H(+). Its function is as follows. Part of the ABC transporter complex NikABCDE involved in nickel import. Responsible for energy coupling to the transport system. In Escherichia coli (strain K12), this protein is Nickel import ATP-binding protein NikD.